The sequence spans 288 residues: Homoserine kinase (288 aa).

Position 79–89 (79–89 (PPARGLGSSSA)) interacts with ATP.

Belongs to the GHMP kinase family. Homoserine kinase subfamily.

It is found in the cytoplasm. It catalyses the reaction L-homoserine + ATP = O-phospho-L-homoserine + ADP + H(+). It functions in the pathway amino-acid biosynthesis; L-threonine biosynthesis; L-threonine from L-aspartate: step 4/5. Catalyzes the ATP-dependent phosphorylation of L-homoserine to L-homoserine phosphate. The chain is Homoserine kinase from Listeria monocytogenes serovar 1/2a (strain ATCC BAA-679 / EGD-e).